The primary structure comprises 163 residues: 6,7-dimethyl-8-ribityllumazine synthase (163 aa).

5-amino-6-(D-ribitylamino)uracil contacts are provided by residues F27, 58 to 60, and 87 to 89; these read ALE and CVV. 92–93 provides a ligand contact to (2S)-2-hydroxy-3-oxobutyl phosphate; the sequence is DT. Catalysis depends on H95, which acts as the Proton donor. Residue N120 participates in 5-amino-6-(D-ribitylamino)uracil binding. R134 contributes to the (2S)-2-hydroxy-3-oxobutyl phosphate binding site.

It belongs to the DMRL synthase family.

The enzyme catalyses (2S)-2-hydroxy-3-oxobutyl phosphate + 5-amino-6-(D-ribitylamino)uracil = 6,7-dimethyl-8-(1-D-ribityl)lumazine + phosphate + 2 H2O + H(+). It participates in cofactor biosynthesis; riboflavin biosynthesis; riboflavin from 2-hydroxy-3-oxobutyl phosphate and 5-amino-6-(D-ribitylamino)uracil: step 1/2. Catalyzes the formation of 6,7-dimethyl-8-ribityllumazine by condensation of 5-amino-6-(D-ribitylamino)uracil with 3,4-dihydroxy-2-butanone 4-phosphate. This is the penultimate step in the biosynthesis of riboflavin. The sequence is that of 6,7-dimethyl-8-ribityllumazine synthase from Rhodopseudomonas palustris (strain BisA53).